Reading from the N-terminus, the 280-residue chain is Probable 6-phosphogluconolactonase 2 (280 aa).

Belongs to the glucosamine/galactosamine-6-phosphate isomerase family. 6-phosphogluconolactonase subfamily.

The catalysed reaction is 6-phospho-D-glucono-1,5-lactone + H2O = 6-phospho-D-gluconate + H(+). The protein operates within carbohydrate degradation; pentose phosphate pathway; D-ribulose 5-phosphate from D-glucose 6-phosphate (oxidative stage): step 2/3. Functionally, hydrolysis of 6-phosphogluconolactone to 6-phosphogluconate. The sequence is that of Probable 6-phosphogluconolactonase 2 from Oryza sativa subsp. indica (Rice).